Consider the following 704-residue polypeptide: Polyribonucleotide nucleotidyltransferase (704 aa).

Mg(2+)-binding residues include Asp488 and Asp494. A KH domain is found at 555-614; that stretch reads PRITTLKINPEKIRDVIGKGGATIRALTEETGTTIELEDDGTVKIASANGDATKEAIRRI. Positions 624-692 constitute an S1 motif domain; that stretch reads GTIYNGKVVR…RQGRVRLSMK (69 aa).

The protein belongs to the polyribonucleotide nucleotidyltransferase family. Component of the RNA degradosome, which is a multiprotein complex involved in RNA processing and mRNA degradation. Mg(2+) is required as a cofactor.

The protein resides in the cytoplasm. It carries out the reaction RNA(n+1) + phosphate = RNA(n) + a ribonucleoside 5'-diphosphate. In terms of biological role, involved in mRNA degradation. Catalyzes the phosphorolysis of single-stranded polyribonucleotides processively in the 3'- to 5'-direction. The protein is Polyribonucleotide nucleotidyltransferase of Shewanella sediminis (strain HAW-EB3).